A 565-amino-acid polypeptide reads, in one-letter code: Dihydroxy-acid dehydratase (565 aa).

Residue Asp-83 participates in Mg(2+) binding. Cys-124 contributes to the [2Fe-2S] cluster binding site. Asp-125 and Lys-126 together coordinate Mg(2+). Residue Lys-126 is modified to N6-carboxylysine. Cys-197 contributes to the [2Fe-2S] cluster binding site. Residue Glu-451 participates in Mg(2+) binding. Ser-477 serves as the catalytic Proton acceptor.

The protein belongs to the IlvD/Edd family. In terms of assembly, homodimer. The cofactor is [2Fe-2S] cluster. Mg(2+) serves as cofactor.

It carries out the reaction (2R)-2,3-dihydroxy-3-methylbutanoate = 3-methyl-2-oxobutanoate + H2O. It catalyses the reaction (2R,3R)-2,3-dihydroxy-3-methylpentanoate = (S)-3-methyl-2-oxopentanoate + H2O. It functions in the pathway amino-acid biosynthesis; L-isoleucine biosynthesis; L-isoleucine from 2-oxobutanoate: step 3/4. Its pathway is amino-acid biosynthesis; L-valine biosynthesis; L-valine from pyruvate: step 3/4. In terms of biological role, functions in the biosynthesis of branched-chain amino acids. Catalyzes the dehydration of (2R,3R)-2,3-dihydroxy-3-methylpentanoate (2,3-dihydroxy-3-methylvalerate) into 2-oxo-3-methylpentanoate (2-oxo-3-methylvalerate) and of (2R)-2,3-dihydroxy-3-methylbutanoate (2,3-dihydroxyisovalerate) into 2-oxo-3-methylbutanoate (2-oxoisovalerate), the penultimate precursor to L-isoleucine and L-valine, respectively. The protein is Dihydroxy-acid dehydratase of Symbiobacterium thermophilum (strain DSM 24528 / JCM 14929 / IAM 14863 / T).